The sequence spans 296 residues: Small ribosomal subunit biogenesis GTPase RsgA (296 aa).

The region spanning 63 to 224 (KNQLVRPMVA…IADTPGFSSY (162 aa)) is the CP-type G domain. GTP contacts are provided by residues 112-115 (SKTD) and 167-175 (GQTGAGKST). 4 residues coordinate Zn(2+): Cys248, Cys253, His255, and Cys261.

Belongs to the TRAFAC class YlqF/YawG GTPase family. RsgA subfamily. Monomer. Associates with 30S ribosomal subunit, binds 16S rRNA. Requires Zn(2+) as cofactor.

The protein resides in the cytoplasm. In terms of biological role, one of several proteins that assist in the late maturation steps of the functional core of the 30S ribosomal subunit. Helps release RbfA from mature subunits. May play a role in the assembly of ribosomal proteins into the subunit. Circularly permuted GTPase that catalyzes slow GTP hydrolysis, GTPase activity is stimulated by the 30S ribosomal subunit. In Limosilactobacillus fermentum (strain NBRC 3956 / LMG 18251) (Lactobacillus fermentum), this protein is Small ribosomal subunit biogenesis GTPase RsgA.